Here is a 374-residue protein sequence, read N- to C-terminus: Mitochondrial import inner membrane translocase subunit tim50 (374 aa).

The N-terminal 48 residues, 1–48 (MILNKVAKCYGKQIGFFGNKTTQFIKPNQTIFLIGGTKRLFTTQQQQS), are a transit peptide targeting the mitochondrion. The interval 42 to 97 (TTQQQQSPKKEEPKSEQQKKVEDKTEEKEKEKDEEENENEKEKENEDGEGQKKKSK) is disordered. Composition is skewed to basic and acidic residues over residues 49–72 (PKKEEPKSEQQKKVEDKTEEKEKE) and 81–93 (EKEKENEDGEGQK). Residues 103–125 (IVTSVTSTFFAGVLVASTFGYLT) form a helical membrane-spanning segment. The region spanning 191–332 (PGGKKYTLVI…IELLPVLESF (142 aa)) is the FCP1 homology domain.

It belongs to the TIM50 family. In terms of assembly, component of the mitochondrial import inner membrane translocase complex.

The protein localises to the mitochondrion inner membrane. In terms of biological role, component of the mitochondrial import inner membrane translocase that mediates the translocation of transit peptide-containing proteins across the mitochondrial inner membrane. The chain is Mitochondrial import inner membrane translocase subunit tim50 (timm50) from Dictyostelium discoideum (Social amoeba).